The following is a 181-amino-acid chain: Protein Syd (181 aa).

Belongs to the Syd family.

It localises to the cell inner membrane. Its function is as follows. Interacts with the SecY protein in vivo. May bind preferentially to an uncomplexed state of SecY, thus functioning either as a chelating agent for excess SecY in the cell or as a regulatory factor that negatively controls the translocase function. In Escherichia coli (strain K12 / DH10B), this protein is Protein Syd.